The sequence spans 191 residues: Small ribosomal subunit protein uS5 (191 aa).

The 64-residue stretch at 20-83 (FADRLVAINR…EQAKRQMIRV (64 aa)) folds into the S5 DRBM domain. Residues 158-191 (TSPRMVAQRRGKKVSDILKKDGEPAEAAAEPAEA) form a disordered region. Positions 170–180 (KVSDILKKDGE) are enriched in basic and acidic residues. The segment covering 182 to 191 (AEAAAEPAEA) has biased composition (low complexity).

This sequence belongs to the universal ribosomal protein uS5 family. In terms of assembly, part of the 30S ribosomal subunit. Contacts proteins S4 and S8.

With S4 and S12 plays an important role in translational accuracy. Its function is as follows. Located at the back of the 30S subunit body where it stabilizes the conformation of the head with respect to the body. The chain is Small ribosomal subunit protein uS5 from Dinoroseobacter shibae (strain DSM 16493 / NCIMB 14021 / DFL 12).